The primary structure comprises 27 residues: uncharacterized protein (27 aa).

This is an uncharacterized protein from Archaeoglobus fulgidus (strain ATCC 49558 / DSM 4304 / JCM 9628 / NBRC 100126 / VC-16).